The following is a 431-amino-acid chain: Enolase (431 aa).

Residue Gln-166 participates in (2R)-2-phosphoglycerate binding. Catalysis depends on Glu-208, which acts as the Proton donor. Asp-245, Glu-289, and Asp-316 together coordinate Mg(2+). The (2R)-2-phosphoglycerate site is built by Lys-341, Arg-370, Ser-371, and Lys-392. Lys-341 acts as the Proton acceptor in catalysis.

It belongs to the enolase family. Requires Mg(2+) as cofactor.

It localises to the cytoplasm. The protein resides in the secreted. Its subcellular location is the cell surface. It carries out the reaction (2R)-2-phosphoglycerate = phosphoenolpyruvate + H2O. It participates in carbohydrate degradation; glycolysis; pyruvate from D-glyceraldehyde 3-phosphate: step 4/5. In terms of biological role, catalyzes the reversible conversion of 2-phosphoglycerate (2-PG) into phosphoenolpyruvate (PEP). It is essential for the degradation of carbohydrates via glycolysis. The protein is Enolase of Ruminiclostridium cellulolyticum (strain ATCC 35319 / DSM 5812 / JCM 6584 / H10) (Clostridium cellulolyticum).